The primary structure comprises 106 residues: Thioredoxin-2 (106 aa).

One can recognise a Thioredoxin domain in the interval 2–106 (VYQIKDKADL…RLEDVIKANI (105 aa)). Residues C32 and C35 each act as nucleophile in the active site. The cysteines at positions 32 and 35 are disulfide-linked.

It belongs to the thioredoxin family.

Participates in various redox reactions through the reversible oxidation of its active center dithiol to a disulfide and catalyzes dithiol-disulfide exchange reactions. As a reducing substrate of peroxiredoxin 1, thioredoxin 2 is preferred over thioredoxin 1. In Drosophila yakuba (Fruit fly), this protein is Thioredoxin-2.